Reading from the N-terminus, the 144-residue chain is Maximins 2/H8 type 2 (144 aa).

Positions 1 to 18 (MNFKYIVAVSFLIASAYA) are cleaved as a signal peptide. A propeptide spanning residues 19-43 (RSEENEIQSLSQRDVLEEESLREIR) is cleaved from the precursor. At asparagine 70 the chain carries Asparagine amide. A propeptide spanning residues 74 to 123 (TAEEHEVMKRLETVMRDLDSLDYPEEASERETRGFNQEEIANLFTKKEKR) is cleaved from the precursor. Isoleucine 143 carries the isoleucine amide modification.

Belongs to the bombinin family. Expressed by the skin glands.

The protein localises to the secreted. Maximin-2 shows antibacterial activity against both Gram-positive and Gram-negative bacteria. It also shows antimicrobial activity against the fungus C.albicans, but not against A.flavus nor P.uticale. It has little hemolytic activity. Functionally, maximin-H8 shows antimicrobial activity against bacteria and against the fungus C.albicans. Shows strong hemolytic activity. In Bombina maxima (Giant fire-bellied toad), this protein is Maximins 2/H8 type 2.